The sequence spans 541 residues: Membrane protein insertase YidC (541 aa).

Transmembrane regions (helical) follow at residues 7–27 (LFLVALLFVSFLIWQAWQTDH), 340–360 (QLIHSFVGNWGFAIIIITFIV), 415–435 (LGGCFPLLIQMPIFLALYYML), 453–473 (LAAPDPFYILPILMGVTMFFI), and 494–514 (PVIFTVFFLWFPSGLVLYYIV).

This sequence belongs to the OXA1/ALB3/YidC family. Type 1 subfamily. In terms of assembly, interacts with the Sec translocase complex via SecD. Specifically interacts with transmembrane segments of nascent integral membrane proteins during membrane integration.

Its subcellular location is the cell inner membrane. In terms of biological role, required for the insertion and/or proper folding and/or complex formation of integral membrane proteins into the membrane. Involved in integration of membrane proteins that insert both dependently and independently of the Sec translocase complex, as well as at least some lipoproteins. Aids folding of multispanning membrane proteins. The polypeptide is Membrane protein insertase YidC (Edwardsiella ictaluri (strain 93-146)).